The following is a 157-amino-acid chain: UPF0251 protein CLD_3165 (157 aa).

It belongs to the UPF0251 family.

In Clostridium botulinum (strain Okra / Type B1), this protein is UPF0251 protein CLD_3165.